We begin with the raw amino-acid sequence, 318 residues long: MKCNDKMVVIMGATGSGKSSLSVDLALHFKAEIINSDKMQFYDGLKITTNQSTIEDRRGVPHHLLGELNPEAGEVTAAEFRVMAAEAISEITQRKKLPILAGGSNSYIHALLAKSYDPENYPFSDHKGSICSELKYDCCFIWIDVDQSVLFEYLSLRLDLMMKSGMFEEIAEFHRSKKAPKEPLGIWKAIGVQEFDDYLKMYKWDNDMDKWDPMRKEAYEKAVRAIKENTFQLTKDQITKINKLRNAGWDIKKVDATASFREAIRAAKEGEGVAEMQRKIWNKEVLEPCVKIVRSHLDQPINYYYYYFYLLKRFLSLN.

Position 12 to 19 (12 to 19 (GATGSGKS)) interacts with ATP.

Belongs to the IPP transferase family. It depends on Mg(2+) as a cofactor. Expressed in immature seeds with highest expression in the chalazal endosperm.

The protein resides in the cytoplasm. It carries out the reaction dimethylallyl diphosphate + ADP = N(6)-(dimethylallyl)adenosine 5'-diphosphate + diphosphate. The enzyme catalyses dimethylallyl diphosphate + ATP = N(6)-(dimethylallyl)adenosine 5'-triphosphate + diphosphate. In terms of biological role, involved in cytokinin biosynthesis. Catalyzes the transfer of an isopentenyl group from dimethylallyl diphosphate (DMAPP) to ATP and ADP, but not to AMP. Has no DMAPP:tRNA isopentenyltransferase activity. The protein is Adenylate isopentenyltransferase 4 (IPT4) of Arabidopsis thaliana (Mouse-ear cress).